The following is a 494-amino-acid chain: Putative NAD kinase 3 (494 aa).

Belongs to the NAD kinase family.

The catalysed reaction is NAD(+) + ATP = ADP + NADP(+) + H(+). The protein is Putative NAD kinase 3 of Oryza sativa subsp. japonica (Rice).